The chain runs to 176 residues: Envelope protein 167 (176 aa).

Residue Met1 is a topological domain, intravirion. Residues 2-22 (YLVLLIAIILFITIILVIFLI) form a helical membrane-spanning segment. The Virion surface portion of the chain corresponds to 23–176 (SGLFYPEQNP…AVMAIPRKVL (154 aa)).

This sequence belongs to the asfivirus envelope protein p22 family.

The protein localises to the virion membrane. It localises to the host cell membrane. In African swine fever virus (isolate Warthog/Namibia/Wart80/1980) (ASFV), this protein is Envelope protein 167.